The primary structure comprises 484 residues: Xylulose kinase (484 aa).

Position 77-78 (77-78 (MH)) interacts with substrate. Residue D233 is the Proton acceptor of the active site.

Belongs to the FGGY kinase family. In terms of assembly, homodimer.

The catalysed reaction is D-xylulose + ATP = D-xylulose 5-phosphate + ADP + H(+). It carries out the reaction 1-deoxy-D-xylulose + ATP = 1-deoxy-D-xylulose 5-phosphate + ADP + H(+). Its activity is regulated as follows. Sugar binding is accompanied by a dramatic hinge-bending movement that enhances interactions with Mg-ATP. Its function is as follows. Catalyzes the phosphorylation of D-xylulose to D-xylulose 5-phosphate. Also catalyzes the phosphorylation of 1-deoxy-D-xylulose to 1-deoxy-D-xylulose 5-phosphate, with lower efficiency. Can also use D-ribulose, xylitol and D-arabitol, but D-xylulose is preferred over the other substrates. Has a weak substrate-independent Mg-ATP-hydrolyzing activity. In Escherichia coli (strain K12), this protein is Xylulose kinase.